Consider the following 624-residue polypeptide: Atypical kinase COQ8B, mitochondrial (624 aa).

Residues 90–117 (EMPPDFSSKDGRGETSETPVGAATGTIK) are disordered. The chain crosses the membrane as a helical span at residues 189–205 (LANFGGLAVGLGIGAIA). The short motif at 249-252 (KIGQ) is the KxGQ motif element. The 233-residue stretch at 285-517 (MHKVLEEELG…ATVLKKSKDL (233 aa)) folds into the Protein kinase domain. The short motif at 310-313 (AAAS) is the AAAS motif element. ATP is bound by residues serine 313, lysine 331, and 418 to 421 (MELV). Aspartate 461 (proton acceptor) is an active-site residue. ATP contacts are provided by asparagine 466 and aspartate 480.

It belongs to the protein kinase superfamily. ADCK protein kinase family. As to quaternary structure, homodimer; homodimerizes via its transmembrane region. Interacts with the multi-subunit COQ enzyme complex.

The protein resides in the mitochondrion membrane. It is found in the cytoplasm. Its subcellular location is the cytosol. It localises to the cell membrane. The protein operates within cofactor biosynthesis; ubiquinone biosynthesis. Functionally, atypical kinase involved in the biosynthesis of coenzyme Q, also named ubiquinone, an essential lipid-soluble electron transporter for aerobic cellular respiration. Its substrate specificity is still unclear: may act as a protein kinase that mediates phosphorylation of COQ3. According to other reports, acts as a small molecule kinase, possibly a lipid kinase that phosphorylates a prenyl lipid in the ubiquinone biosynthesis pathway, as suggested by its ability to bind coenzyme Q lipid intermediates. However, the small molecule kinase activity was not confirmed by another publication. Required for podocyte migration. This is Atypical kinase COQ8B, mitochondrial from Danio rerio (Zebrafish).